The primary structure comprises 287 residues: Phospholipid phosphatase 2 (287 aa).

Residues 1–4 are Cytoplasmic-facing; the sequence is MERR. Residues 5–25 form a helical membrane-spanning segment; sequence WVFVLLDVLCVLVAALPCAIL. The Lumenal segment spans residues 26-51; the sequence is TFVNTPYKRGFYCGDDSIRYPYRPDT. Residues 52 to 72 form a helical membrane-spanning segment; sequence ITHGLMAGVIITATVILVSAG. Residues 73–87 are Cytoplasmic-facing; the sequence is EAYLVYTDRLYSRSD. A helical membrane pass occupies residues 88-108; that stretch reads FNNYLAALYKVVGTFLFGAAV. Topologically, residues 109–161 are lumenal; it reads SQSLTDLAKYMTGRLRPNFLAVCDPDWSRVNCSAYVQVEVCRGSSANVTESRL. Positions 117 to 125 are phosphatase sequence motif I; it reads KYMTGRLRP. N-linked (GlcNAc...) asparagine glycans are attached at residues N139 and N155. Residues 162-182 traverse the membrane as a helical segment; it reads SFYSGHSSFGMYCMVFLALYV. Residues 164-167 form a phosphatase sequence motif II region; the sequence is YSGH. The active-site Proton donors is the H167. At 183–193 the chain is on the cytoplasmic side; the sequence is QARLCWKWARL. Residues 194-211 traverse the membrane as a helical segment; that stretch reads LRPTVQFFLVAFALYVGY. Topologically, residues 212-218 are lumenal; that stretch reads TRVSDHK. The tract at residues 212 to 223 is phosphatase sequence motif III; it reads TRVSDHKHHWSD. The active-site Nucleophile is H219. The chain crosses the membrane as a helical span at residues 219–239; it reads HHWSDVLVGLLQGALVASLTV. Residues 240-287 lie on the Cytoplasmic side of the membrane; the sequence is RYISDFFKARPPQHCPEEEDLERKPSLSLTLALGETDCNHYGYPVSSS.

It belongs to the PA-phosphatase related phosphoesterase family. Forms functional homodimers and homooligomers. Can also form heterooligomers with PLPP1 and PLPP3. In terms of processing, N-glycosylated.

It localises to the membrane. The protein resides in the cell membrane. Its subcellular location is the early endosome membrane. It is found in the endoplasmic reticulum membrane. The enzyme catalyses a 1,2-diacyl-sn-glycero-3-phosphate + H2O = a 1,2-diacyl-sn-glycerol + phosphate. It catalyses the reaction 1,2-dihexadecanoyl-sn-glycero-3-phosphate + H2O = 1,2-dihexadecanoyl-sn-glycerol + phosphate. The catalysed reaction is 1,2-di-(9Z-octadecenoyl)-sn-glycero-3-phosphate + H2O = 1,2-di-(9Z-octadecenoyl)-sn-glycerol + phosphate. It carries out the reaction a monoacyl-sn-glycero-3-phosphate + H2O = a monoacylglycerol + phosphate. The enzyme catalyses (9Z)-octadecenoyl-sn-glycero-3-phosphate + H2O = (9Z-octadecenoyl)-glycerol + phosphate. It catalyses the reaction sphing-4-enine 1-phosphate + H2O = sphing-4-enine + phosphate. The catalysed reaction is an N-acylsphing-4-enine 1-phosphate + H2O = an N-acylsphing-4-enine + phosphate. It carries out the reaction N-(octanoyl)-sphing-4-enine-1-phosphate + H2O = N-octanoylsphing-4-enine + phosphate. The enzyme catalyses N-(9Z-octadecenoyl)-ethanolamine phosphate + H2O = N-(9Z-octadecenoyl) ethanolamine + phosphate. Its pathway is lipid metabolism; phospholipid metabolism. Magnesium-independent phospholipid phosphatase. Insensitive to N-ethylmaleimide. Its function is as follows. Magnesium-independent phospholipid phosphatase that catalyzes the dephosphorylation of a variety of glycerolipid and sphingolipid phosphate esters including phosphatidate/PA, lysophosphatidate/LPA, sphingosine 1-phosphate/S1P and ceramide 1-phosphate/C1P. Has no apparent extracellular phosphatase activity and therefore most probably acts intracellularly. Also acts on N-oleoyl ethanolamine phosphate/N-(9Z-octadecenoyl)-ethanolamine phosphate, a potential physiological compound. Through dephosphorylation of these bioactive lipid mediators produces new bioactive compounds and may regulate signal transduction in different cellular processes. Indirectly regulates, for instance, cell cycle G1/S phase transition through its phospholipid phosphatase activity. In Bos taurus (Bovine), this protein is Phospholipid phosphatase 2.